Reading from the N-terminus, the 2098-residue chain is Non-reducing polyketide synthase crz7 (2098 aa).

A Starter acyltransferase (SAT) domain is found at 8 to 243 (ILFGDQTVDP…IKLPITAAFH (236 aa)). Residues 364–789 (SSDIAIIGFA…GGNTSLLLED (426 aa)) form the Ketosynthase family 3 (KS3) domain. Residues Cys-532, His-667, and His-706 each act as for beta-ketoacyl synthase activity in the active site. The region spanning 887-1211 (IFLFTGQGSQ…IANAYNSGVK (325 aa)) is the Malonyl-CoA:ACP transacylase (MAT) domain. Positions 1270–1404 (TCLQGVENET…CTVMYGDGQQ (135 aa)) are N-terminal hotdog fold. A PKS/mFAS DH domain is found at 1270 to 1578 (TCLQGVENET…FQQMKRTTLQ (309 aa)). Catalysis depends on His-1305, which acts as the Proton acceptor; for dehydratase activity. Residues 1431–1578 (IHRMLKEMIY…FQQMKRTTLQ (148 aa)) form a C-terminal hotdog fold region. Catalysis depends on Asp-1491, which acts as the Proton donor; for dehydratase activity. Residues 1613–1690 (QSPSAGFSKV…ELRAFFLDKM (78 aa)) form the Carrier 1 domain. Ser-1650 carries the O-(pantetheine 4'-phosphoryl)serine modification. The interval 1693–1725 (PQATANDDDSDDSSEDEDPGYSRSQSNSTISTP) is disordered. A compositionally biased stretch (acidic residues) spans 1698 to 1711 (NDDDSDDSSEDEDP). The segment covering 1714-1724 (SRSQSNSTIST) has biased composition (polar residues). Residues 1725 to 1802 (PEEPDVVSIL…DVQKALGPTS (78 aa)) enclose the Carrier 2 domain. At Ser-1762 the chain carries O-(pantetheine 4'-phosphoryl)serine. The segment at 1844–2080 (LFLLPDGAGS…VSGNHFSIMF (237 aa)) is thioesterase (TE) domain.

Pantetheine 4'-phosphate is required as a cofactor.

It participates in secondary metabolite biosynthesis. Non-reducing polyketide synthase; part of the gene cluster that mediates the biosynthesis of the red pigment cristazarin, a naphthazarin derivative. The polyketide product of crz7 is likely 2-acetyl-1,3,6,8-tetrahydoxynaphthalene (AT4HN) from which a probable biosynthetic route of cristazarin can be deduced. The presence of two O-methyltransferases (crz1 and crz2), an enoyl reductase (crz5), an oxidase (crz8), and a short-chain dehydrogenase (crz9) encoded in the cristazarin biosynthetic cluster is consistent with methylation of a hydroxyl group, addition of two hydroxyl groups to the naphthalene core ring, and reduction of the acetyl side chain. This is Non-reducing polyketide synthase crz7 from Cladonia metacorallifera (Lichen-forming fungus).